The following is a 249-amino-acid chain: Metal-staphylopine import system ATP-binding protein CntF (249 aa).

One can recognise an ABC transporter domain in the interval 2 to 244 (IKIKDVEKSY…DNAYTRELIE (243 aa)). Residue 42–49 (GESGSGKS) participates in ATP binding.

This sequence belongs to the ABC transporter superfamily. As to quaternary structure, the complex is composed of two ATP-binding proteins (CntD and CntF), two transmembrane proteins (CntB and CntC) and a solute-binding protein (CntA).

Its subcellular location is the cell membrane. Its activity is regulated as follows. Nickel/cobalt import is reduced in the presence of zinc. Functionally, part of the ABC transporter complex CntABCDF (Opp1) involved in the uptake of metal in complex with the metallophore staphylopine (StP). Involved in the import of divalent metals ions such as nickel, cobalt and zinc. Probably responsible for energy coupling to the transport system. Plays a major role in nickel/cobalt import in zinc-depleted conditions. Contributes to virulence. Required for full urease activity in vitro. The sequence is that of Metal-staphylopine import system ATP-binding protein CntF from Staphylococcus aureus (strain NCTC 8325 / PS 47).